The following is a 325-amino-acid chain: Dehydrogenase/reductase SDR family member 7B (325 aa).

The Cytoplasmic portion of the chain corresponds to 1–17; that stretch reads MVSAATRKSLLRARVMD. The chain crosses the membrane as a helical; Signal-anchor for type II membrane protein span at residues 18–38; that stretch reads FITSTAILPLLLGCVGLFSLF. Topologically, residues 39–325 are lumenal; the sequence is KLLQWLRMRA…ARKERKSKHS (287 aa). NAD(+) is bound by residues serine 62 and leucine 64. Serine 194 is a binding site for substrate. NAD(+) contacts are provided by tyrosine 207, lysine 211, and threonine 242. Tyrosine 207 functions as the Proton acceptor in the catalytic mechanism.

It belongs to the short-chain dehydrogenases/reductases (SDR) family.

The protein localises to the endoplasmic reticulum membrane. Its function is as follows. Putative oxidoreductase. In Bos taurus (Bovine), this protein is Dehydrogenase/reductase SDR family member 7B (DHRS7B).